The chain runs to 295 residues: Inorganic pyrophosphatase 1 (295 aa).

D19 (nucleophile) is an active-site residue. D19 and D21 together coordinate Mg(2+). The active-site Proton donor is the D21. 2 residues coordinate substrate: D30 and D105. Mg(2+) is bound at residue D190.

This sequence belongs to the HAD-like hydrolase superfamily. As to quaternary structure, tetramer. The cofactor is Mg(2+). Requires Fe(2+) as cofactor. It depends on Ni(2+) as a cofactor. Co(2+) serves as cofactor. Mn(2+) is required as a cofactor.

The catalysed reaction is diphosphate + H2O = 2 phosphate + H(+). In terms of biological role, catalyzes the specific cleavage of pyrophosphate. The sequence is that of Inorganic pyrophosphatase 1 (PS2) from Arabidopsis thaliana (Mouse-ear cress).